A 279-amino-acid polypeptide reads, in one-letter code: Lyso-glycine lipid O-acyltransferase (279 aa).

It belongs to the O-acyltransferase GlsA family.

The catalysed reaction is a lyso-glycine lipid + a fatty acyl-[ACP] = a glycine lipid + holo-[ACP]. It carries out the reaction N-[(3R)-3-hydroxyhexadecanoyl]-glycine + hexadecanoyl-[ACP] = N-[(3R)-3-(hexadecanoyloxy)hexadecanoyl]-glycine + holo-[ACP]. Its pathway is lipid metabolism. Is involved in the production of glycine lipids (GL), which are phosphorus-free membrane lipids. Catalyzes the second step of GL biosynthesis, i.e. the O-acylation of the hydroxyl group of lyso-glycine lipids, resulting in the production of the mature diacylated glycine lipids. This is Lyso-glycine lipid O-acyltransferase from Phocaeicola vulgatus (strain ATCC 8482 / DSM 1447 / JCM 5826 / CCUG 4940 / NBRC 14291 / NCTC 11154) (Bacteroides vulgatus).